The following is a 1355-amino-acid chain: Phospholipid-transporting ATPase DRS2 (1355 aa).

The span at 1–15 shows a compositional bias: basic and acidic residues; it reads MNDDRETPPKRKPGE. The disordered stretch occupies residues 1–50; that stretch reads MNDDRETPPKRKPGEDDTLFDIDFLDDTTSHSGSRSKVTNSHANANYIPP. The involved in autoinhibition stretch occupies residues 1–104; it reads MNDDRETPPK…SDAYQPQSLR (104 aa). Topologically, residues 1-221 are cytoplasmic; sequence MNDDRETPPK…TFLPKFLFQE (221 aa). The span at 16-26 shows a compositional bias: acidic residues; sequence DDTLFDIDFLD. The span at 30 to 44 shows a compositional bias: polar residues; that stretch reads SHSGSRSKVTNSHAN. Phosphoserine is present on S102. The chain crosses the membrane as a helical span at residues 222 to 242; that stretch reads FSKYANLFFLCTSAIQQVPHV. The tract at residues 237-238 is involved in phosphatidylserine substrate recognition; sequence QQ. Topologically, residues 243 to 246 are lumenal; it reads SPTN. A helical membrane pass occupies residues 247–267; sequence RYTTIGTLLVVLIVSAMKECI. Residues 268–449 lie on the Cytoplasmic side of the membrane; sequence EDIKRANSDK…VEKIINRQII (182 aa). Residues 450–470 form a helical membrane-spanning segment; it reads ALFTVLIVLILISSIGNVIMS. Residues 471–490 lie on the Lumenal side of the membrane; the sequence is TADAKHLSYLYLEGTNKAGL. Residues 491-511 form a helical membrane-spanning segment; that stretch reads FFKDFLTFWILFSNLVPISLF. Topologically, residues 512–1012 are cytoplasmic; the sequence is VTVELIKYYQ…WSYQRISVAI (501 aa). Catalysis depends on D560, which acts as the 4-aspartylphosphate intermediate. D560, K561, T562, E655, F698, S700, K703, K721, R755, T756, T835, G836, D837, R928, and K934 together coordinate ATP. D560 contributes to the Mg(2+) binding site. Residue T562 participates in Mg(2+) binding. D954 serves as a coordination point for Mg(2+). ATP contacts are provided by N957 and D958. D958 is a binding site for Mg(2+). The helical transmembrane segment at 1013–1033 threads the bilayer; the sequence is LYSFYKNTALYMTQFWYVFAN. Topologically, residues 1034–1043 are lumenal; the sequence is AFSGQSIMES. The chain crosses the membrane as a helical span at residues 1044-1064; the sequence is WTMSFYNLFFTVWPPFVIGVF. At 1065 to 1094 the chain is on the cytoplasmic side; that stretch reads DQFVSSRLLERYPQLYKLGQKGQFFSVYIF. Residues 1095–1115 form a helical membrane-spanning segment; that stretch reads WGWIINGFFHSAIVFIGTILI. Residues 1116 to 1131 are Lumenal-facing; it reads YRYGFALNMHGELADH. A helical transmembrane segment spans residues 1132–1152; that stretch reads WSWGVTVYTTSVIIVLGKAAL. Residue K1149 coordinates a 1,2-diacyl-sn-glycero-3-phospho-(1D-myo-inositol 4-phosphate). At 1153–1161 the chain is on the cytoplasmic side; sequence VTNQWTKFT. Residues 1162-1182 form a helical membrane-spanning segment; the sequence is LIAIPGSLLFWLIFFPIYASI. Over 1183–1202 the chain is Lumenal; the sequence is FPHANISREYYGVVKHTYGS. Residues 1203 to 1223 traverse the membrane as a helical segment; the sequence is GVFWLTLIVLPIFALVRDFLW. R1219, W1223, K1224, Y1235, and H1236 together coordinate a 1,2-diacyl-sn-glycero-3-phospho-(1D-myo-inositol 4-phosphate). Over 1224–1355 the chain is Cytoplasmic; that stretch reads KYYKRMYEPE…SSRDDISFDI (132 aa). Positions 1230–1282 are interaction with GEA2; the sequence is YEPETYHVIQEMQKYNISDSRPHVQQFQNAIRKVRQVQRMKKQRGFAFSQAEE. The segment at 1231–1309 is involved in autoinhibition; it reads EPETYHVIQE…KYGELQDASA (79 aa). The interval 1305–1355 is disordered; it reads QDASANPFNDNNGLGSNDFESAEPFIENPFADGNQNSNRFSSSRDDISFDI. Over residues 1307-1323 the composition is skewed to polar residues; it reads ASANPFNDNNGLGSNDF. Residues 1346-1355 are compositionally biased toward basic and acidic residues; that stretch reads SSRDDISFDI.

The protein belongs to the cation transport ATPase (P-type) (TC 3.A.3) family. Type IV subfamily. Component of a flippase complex consisting of DRS2 and CDC50. Interacts with CDC50; the interaction is direct, is required for their mutual export from the endoplasmic reticulum, and preferentially occurs when DRS2 is in the E2P state. Interacts (via C-terminus) with GEA2 (via SEC7 domain); the interaction is direct. Interacts with GEA1. Requires Mg(2+) as cofactor.

It localises to the golgi apparatus. Its subcellular location is the trans-Golgi network membrane. The protein resides in the endosome membrane. The catalysed reaction is ATP + H2O + phospholipidSide 1 = ADP + phosphate + phospholipidSide 2.. It catalyses the reaction a 1,2-diacyl-sn-glycero-3-phospho-L-serine(out) + ATP + H2O = a 1,2-diacyl-sn-glycero-3-phospho-L-serine(in) + ADP + phosphate + H(+). The enzyme catalyses a 1,2-diacyl-sn-glycero-3-phosphoethanolamine(out) + ATP + H2O = a 1,2-diacyl-sn-glycero-3-phosphoethanolamine(in) + ADP + phosphate + H(+). With respect to regulation, allosterically activated by binding 1,2-diacyl-sn-glycero-3-phospho-(1D-myo-inositol 4-phosphate) (phosphatidylinositol 4-phosphate). Inhibited by orthovanadate, N-ethylmaleimide, trifluoroberyllate and tetrafluoroaluminate; orthovanadate and N-ethylmaleimide inhibit phosphorylation of the active site aspartic acid. The ATPase activity is not potently stimulated by phosphatidylinositol 3-phosphate and phosphatidylinositol 5-phosphate, phosphatidylinositol 4,5-bisphosphate or phosphatidylcholine. Not inhibited by azide. Catalytic component of a P4-ATPase flippase complex which catalyzes the hydrolysis of ATP coupled to the transport of phosphatidylserine and small amounts of ethanolamine from the lumen to the cytosolic leaflet of the trans-Golgi network and ensures the maintenance of asymmetric distribution of phospholipids. Contributes to clathrin-coated vesicle formation, endocytosis, and protein trafficking between the Golgi and endosomal system. Does not appear to transport phosphatidylcholine or sphingomyelin. The chain is Phospholipid-transporting ATPase DRS2 from Saccharomyces cerevisiae (strain ATCC 204508 / S288c) (Baker's yeast).